A 144-amino-acid polypeptide reads, in one-letter code: Large ribosomal subunit protein uL15 (144 aa).

The disordered stretch occupies residues 1-52; the sequence is MRLNTLSPAEGAKHAPKRVGRGIGSGLGKTAGRGHKGQNSRSGGGVRRGFEG. Residues 21-31 show a composition bias toward gly residues; it reads RGIGSGLGKTA.

The protein belongs to the universal ribosomal protein uL15 family. As to quaternary structure, part of the 50S ribosomal subunit.

Binds to the 23S rRNA. The polypeptide is Large ribosomal subunit protein uL15 (Yersinia enterocolitica serotype O:8 / biotype 1B (strain NCTC 13174 / 8081)).